A 220-amino-acid chain; its full sequence is Putative GED domain-containing protein DNM1P46 (220 aa).

Positions 18-46 are disordered; it reads VSVETRNVKPQGKDSKAEENGSHSFMHSM. Positions 28–38 are enriched in basic and acidic residues; that stretch reads QGKDSKAEENG. One can recognise a GED domain in the interval 54–149; sequence METTQNLVDS…CCPTCTRLGT (96 aa). The disordered stretch occupies residues 173 to 194; sequence DTPGGVGRAGTAARRDSRGNEK. The segment covering 185–194 has biased composition (basic and acidic residues); it reads ARRDSRGNEK.

The sequence is that of Putative GED domain-containing protein DNM1P46 (DNM1P46) from Homo sapiens (Human).